The chain runs to 72 residues: uncharacterized protein (72 aa).

This is an uncharacterized protein from Archaeoglobus fulgidus (strain ATCC 49558 / DSM 4304 / JCM 9628 / NBRC 100126 / VC-16).